The chain runs to 231 residues: Ureidoacrylate amidohydrolase RutB (231 aa).

Catalysis depends on Asp25, which acts as the Proton acceptor. The active site involves Lys134. Residue Cys167 is the Nucleophile of the active site.

It belongs to the isochorismatase family. RutB subfamily.

The enzyme catalyses (Z)-3-ureidoacrylate + H2O + H(+) = (Z)-3-aminoacrylate + NH4(+) + CO2. It carries out the reaction (Z)-3-ureidoacrylate + H2O = (Z)-3-aminoacrylate + carbamate + H(+). It catalyses the reaction (Z)-2-methylureidoacrylate + H2O + H(+) = (Z)-2-methylaminoacrylate + NH4(+) + CO2. Functionally, hydrolyzes ureidoacrylate to form aminoacrylate and carbamate. The carbamate hydrolyzes spontaneously, thereby releasing one of the nitrogen atoms of the pyrimidine ring as ammonia and one of its carbon atoms as CO2. The sequence is that of Ureidoacrylate amidohydrolase RutB from Escherichia coli O139:H28 (strain E24377A / ETEC).